Reading from the N-terminus, the 225-residue chain is RNA-binding protein 24-A (225 aa).

In terms of domain architecture, RRM spans 11-88 (TKIFVGGLPY…RKANVNLAYL (78 aa)).

The protein localises to the nucleus. Its subcellular location is the cytoplasm. Functionally, multifunctional RNA-binding protein involved in the regulation of pre-mRNA splicing, mRNA stability and mRNA translation important for cell fate decision and differentiation. Plays a major role in pre-mRNA alternative splicing regulation. Mediates preferentially muscle-specific exon inclusion in numerous mRNAs important for striated cardiac and skeletal muscle cell differentiation. Binds to intronic splicing enhancer (ISE) composed of stretches of GU-rich motifs localized in flanking intron of exon that will be included by alternative splicing. Involved in embryonic stem cell (ESC) transition to cardiac cell differentiation by promoting pre-mRNA alternative splicing events of several pluripotency and/or differentiation genes. Plays a role in the regulation of mRNA stability and mRNA translation to which it is bound. Involved in myogenic differentiation by regulating myog levels. Binds to a huge amount of mRNAs. Required for embryonic heart development, sarcomer and M-band formation in striated muscles. The chain is RNA-binding protein 24-A (rbm24-a) from Xenopus laevis (African clawed frog).